A 448-amino-acid polypeptide reads, in one-letter code: Exodeoxyribonuclease 7 large subunit (448 aa).

Belongs to the XseA family. As to quaternary structure, heterooligomer composed of large and small subunits.

It is found in the cytoplasm. The protein resides in the nucleoid. It carries out the reaction Exonucleolytic cleavage in either 5'- to 3'- or 3'- to 5'-direction to yield nucleoside 5'-phosphates.. Bidirectionally degrades single-stranded DNA into large acid-insoluble oligonucleotides, which are then degraded further into small acid-soluble oligonucleotides. The protein is Exodeoxyribonuclease 7 large subunit of Bacillus subtilis (strain 168).